We begin with the raw amino-acid sequence, 299 residues long: MPYPKKVTIKEVGPRDGLQNEPVWIATEDKITWINQLSRTGLSYIEITSFVHPKWIPALRDAIDVAKGIDREKGVTYAALVPNQRGLENALEGGINEACVFMSASETHNRKNINKSTSESLHILKQVNNDAQKANLTTRAYLSTVFGCPYEKDVPIEQVIRLSEALFEFGISELSLGDTIGAANPAQVETVLEALLARFPANQIALHFHDTRGTALANMVTALQMGITVFDGSAGGLGGCPYAPGSSGNAATEDIVYMLEQMDIKTNVKLEKLLSAAKWIEEKMGKPLPSRNLQVFKSS.

The region spanning 7–274 (VTIKEVGPRD…KTNVKLEKLL (268 aa)) is the Pyruvate carboxyltransferase domain. R15 serves as a coordination point for substrate. Residues D16, H207, and H209 each coordinate a divalent metal cation. Residue C240 is part of the active site. Residue N249 participates in a divalent metal cation binding.

The protein belongs to the HMG-CoA lyase family. Homodimer and homotetramer.

The catalysed reaction is (3S)-3-hydroxy-3-methylglutaryl-CoA = acetoacetate + acetyl-CoA. It functions in the pathway metabolic intermediate metabolism; (S)-3-hydroxy-3-methylglutaryl-CoA degradation; acetoacetate from (S)-3-hydroxy-3-methylglutaryl-CoA: step 1/1. In terms of biological role, involved in the catabolism of branched amino acids such as leucine. This is Hydroxymethylglutaryl-CoA lyase YngG (yngG) from Bacillus subtilis (strain 168).